The sequence spans 123 residues: CD59A glycoprotein (123 aa).

The signal sequence occupies residues 1 to 23; the sequence is MRAQRGLILLLLLLAVFCSTAVS. One can recognise a UPAR/Ly6 domain in the interval 24–96; sequence LTCYHCFQPV…CCQFNLCNKS (73 aa). Disulfide bonds link Cys26-Cys50, Cys29-Cys37, Cys43-Cys63, Cys69-Cys87, and Cys88-Cys93. Asn40 carries N-linked (GlcNAc...) asparagine glycosylation. N-linked (GlcNAc...) asparagine glycosylation is present at Asn94. The propeptide at 97–123 is removed in mature form; it reads DGSLGKTPLLGTSVLVAILNLCFLSHL.

As to quaternary structure, interacts with T-cell surface antigen CD2. In terms of processing, N- and O-glycosylated. As to expression, expressed in all tissues examined (liver, kidney, spleen, thymus, brain and heart). Low levels in thymus. Also expressed in mononuclear cells, erythrocytes and platelets. Barely detected in neutrophils.

The protein resides in the cell membrane. The protein localises to the secreted. Functionally, potent inhibitor of the complement membrane attack complex (MAC) action, which protects self-cells from damage during complement activation. Acts by binding to the beta-haipins of C8 (C8A and C8B) components of the assembling MAC, forming an intermolecular beta-sheet that prevents incorporation of the multiple copies of C9 required for complete formation of the osmolytic pore. The protein is CD59A glycoprotein of Mus musculus (Mouse).